We begin with the raw amino-acid sequence, 199 residues long: MVNYPHQLIRKTTVTKSKKKKIDFANRGMSFEAAINATNDYYLSHELAVIHKKPTPVQIVKVDYPKRSRAKIVEAYFRQASTTDYSGVYKGYYIDFEAKETRQKTAMPMKNFHAHQIEHMANVLQQKGICFVLLHFSTLKETYLLPANELISFYQIDKGNKSMPIDYIRKNGFFVKESAFPQVPYLDIIEEKLLGGDYN.

Mg(2+) is bound by residues Thr82, Asp84, Glu97, and Gln116.

It belongs to the RecU family. The cofactor is Mg(2+).

It is found in the cytoplasm. The enzyme catalyses Endonucleolytic cleavage at a junction such as a reciprocal single-stranded crossover between two homologous DNA duplexes (Holliday junction).. Endonuclease that resolves Holliday junction intermediates in genetic recombination. Cleaves mobile four-strand junctions by introducing symmetrical nicks in paired strands. Promotes annealing of linear ssDNA with homologous dsDNA. Required for DNA repair, homologous recombination and chromosome segregation. This Streptococcus agalactiae serotype Ia (strain ATCC 27591 / A909 / CDC SS700) protein is Holliday junction resolvase RecU.